Consider the following 438-residue polypeptide: Tol-Pal system protein TolB (438 aa).

The first 35 residues, 1-35 (MITMKNILKLRATGLLLLLLLMISVLGNGIGQAMA), serve as a signal peptide directing secretion.

The protein belongs to the TolB family. As to quaternary structure, the Tol-Pal system is composed of five core proteins: the inner membrane proteins TolA, TolQ and TolR, the periplasmic protein TolB and the outer membrane protein Pal. They form a network linking the inner and outer membranes and the peptidoglycan layer.

The protein resides in the periplasm. Part of the Tol-Pal system, which plays a role in outer membrane invagination during cell division and is important for maintaining outer membrane integrity. The chain is Tol-Pal system protein TolB from Desulfotalea psychrophila (strain LSv54 / DSM 12343).